A 481-amino-acid chain; its full sequence is Sulfate adenylyltransferase subunit 1 (481 aa).

The tr-type G domain maps to 22–236; the sequence is KDLLRFITCG…LLDSIRLDAD (215 aa). The G1 stretch occupies residues 31 to 38; it reads GSVDDGKS. Position 31–38 (31–38) interacts with GTP; that stretch reads GSVDDGKS. Positions 89–93 are G2; that stretch reads GITID. The G3 stretch occupies residues 110 to 113; that stretch reads DCPG. Residues 110 to 114 and 165 to 168 each bind GTP; these read DCPGH and NKMD. A G4 region spans residues 165 to 168; sequence NKMD. Residues 202 to 204 form a G5 region; that stretch reads SAL.

It belongs to the TRAFAC class translation factor GTPase superfamily. Classic translation factor GTPase family. CysN/NodQ subfamily. In terms of assembly, heterodimer composed of CysD, the smaller subunit, and CysN.

The catalysed reaction is sulfate + ATP + H(+) = adenosine 5'-phosphosulfate + diphosphate. It participates in sulfur metabolism; hydrogen sulfide biosynthesis; sulfite from sulfate: step 1/3. With CysD forms the ATP sulfurylase (ATPS) that catalyzes the adenylation of sulfate producing adenosine 5'-phosphosulfate (APS) and diphosphate, the first enzymatic step in sulfur assimilation pathway. APS synthesis involves the formation of a high-energy phosphoric-sulfuric acid anhydride bond driven by GTP hydrolysis by CysN coupled to ATP hydrolysis by CysD. This chain is Sulfate adenylyltransferase subunit 1, found in Laribacter hongkongensis (strain HLHK9).